A 78-amino-acid polypeptide reads, in one-letter code: Small ribosomal subunit protein bS16 (78 aa).

This sequence belongs to the bacterial ribosomal protein bS16 family.

The sequence is that of Small ribosomal subunit protein bS16 from Maridesulfovibrio salexigens (strain ATCC 14822 / DSM 2638 / NCIMB 8403 / VKM B-1763) (Desulfovibrio salexigens).